The primary structure comprises 55 residues: Large ribosomal subunit protein bL32c (55 aa).

The protein belongs to the bacterial ribosomal protein bL32 family.

It is found in the plastid. The protein resides in the chloroplast. The sequence is that of Large ribosomal subunit protein bL32c from Nicotiana sylvestris (Wood tobacco).